Reading from the N-terminus, the 77-residue chain is Apidermin 2 (77 aa).

The N-terminal stretch at 1–16 (MKSLLILFAIVAVVAA) is a signal peptide.

In terms of tissue distribution, expressed in the epidermis, hypopharyngeal glands, fat body, trachea, esophagus and stomach.

The protein localises to the secreted. Functionally, antimicrobial peptide that binds cell wall carbohydrates of microbial symbionts and induces structural damage. Binds the cell wall carbohydrates mannan, N-acetyl-D-glucosamine and lipopolysaccharide. Can target fungi, Gram-negative and Gram-positive bacteria. This chain is Apidermin 2, found in Apis mellifera (Honeybee).